The primary structure comprises 479 residues: Glycerol-3-phosphate acyltransferase RAM2 (479 aa).

4 consecutive transmembrane segments (helical) span residues 14–34 (YFAL…LVLA), 37–57 (LAGL…LIFA), 215–235 (SPLM…LACL), and 237–257 (IAAG…ALGV). Residues 284 to 289 (HRTLLD) carry the HXXXXD motif motif. Asn448 is a glycosylation site (N-linked (GlcNAc...) asparagine).

Belongs to the GPAT/DAPAT family.

It is found in the membrane. It carries out the reaction sn-glycerol 3-phosphate + an acyl-CoA = a 1-acyl-sn-glycero-3-phosphate + CoA. It functions in the pathway lipid metabolism; glycerolipid metabolism. Involved in the production of cutin monomers. Esterifies acyl-group from acyl-ACP to the sn-2 position of glycerol-3-phosphate, a step in cutin biosynthesis. Required for colonization of the root by mycorrhizal fungi, and appropriate hyphopodia and arbuscule formation. Cutin monomers act as plant signals that promote colonization by arbuscular mycorrhizal fungi. This signaling function has been recruited by pathogenic oomycetes to facilitate appressoria formation and their own invasion. This is Glycerol-3-phosphate acyltransferase RAM2 from Petunia hybrida (Petunia).